A 257-amino-acid polypeptide reads, in one-letter code: Diphthine synthase (257 aa).

S-adenosyl-L-methionine-binding positions include Leu9, Asp85, Val88, Ser113–Ile114, Leu164, Ala209, and His234.

The protein belongs to the diphthine synthase family. In terms of assembly, homodimer.

It carries out the reaction 2-[(3S)-amino-3-carboxypropyl]-L-histidyl-[translation elongation factor 2] + 3 S-adenosyl-L-methionine = diphthine-[translation elongation factor 2] + 3 S-adenosyl-L-homocysteine + 3 H(+). It functions in the pathway protein modification; peptidyl-diphthamide biosynthesis. In terms of biological role, S-adenosyl-L-methionine-dependent methyltransferase that catalyzes the trimethylation of the amino group of the modified target histidine residue in translation elongation factor 2 (EF-2), to form an intermediate called diphthine. The three successive methylation reactions represent the second step of diphthamide biosynthesis. The protein is Diphthine synthase of Methanocaldococcus jannaschii (strain ATCC 43067 / DSM 2661 / JAL-1 / JCM 10045 / NBRC 100440) (Methanococcus jannaschii).